A 556-amino-acid polypeptide reads, in one-letter code: 2-succinyl-5-enolpyruvyl-6-hydroxy-3-cyclohexene-1-carboxylate synthase (556 aa).

The protein belongs to the TPP enzyme family. MenD subfamily. As to quaternary structure, homodimer. Mg(2+) serves as cofactor. The cofactor is Mn(2+). It depends on thiamine diphosphate as a cofactor.

It catalyses the reaction isochorismate + 2-oxoglutarate + H(+) = 5-enolpyruvoyl-6-hydroxy-2-succinyl-cyclohex-3-ene-1-carboxylate + CO2. The protein operates within quinol/quinone metabolism; 1,4-dihydroxy-2-naphthoate biosynthesis; 1,4-dihydroxy-2-naphthoate from chorismate: step 2/7. It functions in the pathway quinol/quinone metabolism; menaquinone biosynthesis. In terms of biological role, catalyzes the thiamine diphosphate-dependent decarboxylation of 2-oxoglutarate and the subsequent addition of the resulting succinic semialdehyde-thiamine pyrophosphate anion to isochorismate to yield 2-succinyl-5-enolpyruvyl-6-hydroxy-3-cyclohexene-1-carboxylate (SEPHCHC). The sequence is that of 2-succinyl-5-enolpyruvyl-6-hydroxy-3-cyclohexene-1-carboxylate synthase from Salmonella paratyphi C (strain RKS4594).